The primary structure comprises 111 residues: Large ribosomal subunit protein uL22 (111 aa).

It belongs to the universal ribosomal protein uL22 family. As to quaternary structure, part of the 50S ribosomal subunit.

In terms of biological role, this protein binds specifically to 23S rRNA; its binding is stimulated by other ribosomal proteins, e.g. L4, L17, and L20. It is important during the early stages of 50S assembly. It makes multiple contacts with different domains of the 23S rRNA in the assembled 50S subunit and ribosome. Its function is as follows. The globular domain of the protein is located near the polypeptide exit tunnel on the outside of the subunit, while an extended beta-hairpin is found that lines the wall of the exit tunnel in the center of the 70S ribosome. The chain is Large ribosomal subunit protein uL22 from Clostridium kluyveri (strain NBRC 12016).